The sequence spans 62 residues: Lepidopteran-selective toxin (62 aa).

The first 24 residues, Met-1 to Ala-24, serve as a signal peptide directing secretion. Intrachain disulfides connect Cys-26/Cys-43, Cys-29/Cys-51, Cys-40/Cys-56, and Cys-44/Cys-58. Tyr-62 is a propeptide.

The protein belongs to the short scorpion toxin superfamily. Chloride channel inhibitor family. In terms of tissue distribution, expressed by the venom gland.

The protein resides in the secreted. In terms of biological role, toxin with unknown function in healthy organisms. On glioma cells, interacts with chloride channels (probably ClC-3/CLCN3) and MMP2 at the surface of glioma cells. This complex is then internalized via caveolae, thus inhibiting the chloride channels necessary for cell shrinkage and tumor propagation. Induces flaccid paralysis in H.virescens larvae. Is not toxic to S.falculata larvae or mice. In Hottentotta tamulus (Eastern Indian scorpion), this protein is Lepidopteran-selective toxin.